Reading from the N-terminus, the 364-residue chain is Fructose-bisphosphate aldolase B (364 aa).

Position 2 is an N-acetylalanine (Ala-2). An N6-succinyllysine modification is found at Lys-13. Residue Ser-36 is modified to Phosphoserine. Thr-39 is subject to Phosphothreonine. Residue Arg-43 participates in beta-D-fructose 1,6-bisphosphate binding. Ser-89 carries the post-translational modification Phosphoserine. The residue at position 119 (Thr-119) is a Phosphothreonine. Lys-121 carries the post-translational modification N6-succinyllysine. Position 132 is a phosphoserine (Ser-132). Glu-188 functions as the Proton acceptor in the catalytic mechanism. Ser-206 bears the Phosphoserine mark. Lys-230 acts as the Schiff-base intermediate with dihydroxyacetone-P in catalysis. Phosphoserine occurs at positions 272, 276, 299, and 301. 272-274 (SGG) is a beta-D-fructose 1,6-bisphosphate binding site. Beta-D-fructose 1,6-bisphosphate is bound at residue Arg-304. A Phosphoserine modification is found at Ser-309. Lys-317 bears the N6-succinyllysine mark.

The protein belongs to the class I fructose-bisphosphate aldolase family. In terms of assembly, homotetramer. Interacts with BBS1, BBS2, BBS4 and BBS7. Forms a ternary complex with G6PD and TP53; this interaction is direct.

The protein resides in the cytoplasm. Its subcellular location is the cytosol. It localises to the cytoskeleton. It is found in the microtubule organizing center. The protein localises to the centrosome. The protein resides in the centriolar satellite. It catalyses the reaction beta-D-fructose 1,6-bisphosphate = D-glyceraldehyde 3-phosphate + dihydroxyacetone phosphate. The enzyme catalyses beta-D-fructose 1-phosphate = D-glyceraldehyde + dihydroxyacetone phosphate. Its pathway is carbohydrate degradation; glycolysis; D-glyceraldehyde 3-phosphate and glycerone phosphate from D-glucose: step 4/4. It functions in the pathway carbohydrate biosynthesis; gluconeogenesis. The protein operates within carbohydrate metabolism; fructose metabolism. In terms of biological role, catalyzes the aldol cleavage of fructose 1,6-biphosphate to form two triosephosphates dihydroxyacetone phosphate and D-glyceraldehyde 3-phosphate in glycolysis as well as the reverse stereospecific aldol addition reaction in gluconeogenesis. In fructolysis, metabolizes fructose 1-phosphate derived from the phosphorylation of dietary fructose by fructokinase into dihydroxyacetone phosphate and D-glyceraldehyde. Acts as an adapter independently of its enzymatic activity, exerts a tumor suppressor role by stabilizing the ternary complex with G6PD and TP53 to inhibit G6PD activity and keep oxidative pentose phosphate metabolism in check. The chain is Fructose-bisphosphate aldolase B from Mus musculus (Mouse).